A 267-amino-acid polypeptide reads, in one-letter code: Thyroxine 5-deiodinase (267 aa).

The Cytoplasmic segment spans residues methionine 1 to histidine 15. Residues alanine 16–leucine 36 form a helical; Signal-anchor for type II membrane protein membrane-spanning segment. Residues aspartate 37–valine 267 lie on the Extracellular side of the membrane. Selenocysteine 131 is an active-site residue. Selenocysteine 131 is a non-standard amino acid (selenocysteine).

This sequence belongs to the iodothyronine deiodinase family. In terms of assembly, monomer. Homodimer. May undergo minor heretodimerization with DIO1 and DIO2.

The protein localises to the cell membrane. Its subcellular location is the endosome membrane. It catalyses the reaction 3,3',5'-triiodo-L-thyronine + iodide + A + H(+) = L-thyroxine + AH2. The enzyme catalyses 3,3'-diiodo-L-thyronine + iodide + A + H(+) = 3,3',5-triiodo-L-thyronine + AH2. It carries out the reaction 3-iodo-L-thyronine + iodide + A + H(+) = 3,5-diiodo-L-thyronine + AH2. The catalysed reaction is L-thyronine + iodide + A + H(+) = 3-iodo-L-thyronine + AH2. It catalyses the reaction 3',5'-diiodo-L-thyronine + iodide + A + H(+) = 3,3',5'-triiodo-L-thyronine + AH2. The enzyme catalyses 3'-iodo-L-thyronine + iodide + A + H(+) = 3,3'-diiodo-L-thyronine + AH2. It carries out the reaction 3,3',5'-triiodothyronamine + iodide + A + H(+) = 3,3',5,5'-tetraiodothyronamine + AH2. The catalysed reaction is 3',5'-diiodothyronamine + iodide + A + H(+) = 3,3',5'-triiodothyronamine + AH2. It catalyses the reaction 3,3'-diiodothyronamine + iodide + A + H(+) = 3,3',5-triiodothyronamine + AH2. The enzyme catalyses 3-iodothyronamine + iodide + A + H(+) = 3,5-diiodothyronamine + AH2. It carries out the reaction 3'-iodothyronamine + iodide + A + H(+) = 3,3'-diiodothyronamine + AH2. The catalysed reaction is thyronamine + iodide + A + H(+) = 3-iodothyronamine + AH2. Functionally, plays a crucial role in the metabolism of thyroid hormones (TH) and has specific roles in TH activation and inactivation by deiodination. Catalyzes the deiodination of L-thyroxine (T4) to 3,3',5'-triiodothyronine (rT3), 3,5,3'-triiodothyronine (T3) to 3,3'-diiodothyronine (3,3'-T2), 3,5-diiodothyronine (3,5-T2) to 3-monoiodothyronine (3-T1), rT3 to 3',5'-diiodothyronine (3',5'-T2) and 3,3'-T2 to 3'-monoiodothyronine (3'-T1) via inner-ring deiodination (IRD). Catalyzes the deiodination of 3-T1 to L-thyronine (T0) via outer-ring deiodination (ORD). Catalyzes the tyrosyl ring deiodinations of 3,3',5,5'-tetraiodothyronamine, 3,3',5'-triiodothyronamine, 3,5,3'-triiodothyronamine, 3,5-diiodothyronamine, 3,3'-diiodothyronamine and 3-iodothyronamine. The polypeptide is Thyroxine 5-deiodinase (dio3) (Sparus aurata (Gilthead sea bream)).